A 357-amino-acid polypeptide reads, in one-letter code: MRKIIHVDMDAFYASVEQRDNPELRGRPVAVGSAAARGVVAAASYEAREFGVRSAMPSVTAARRCPDLIFVPPRFDVYKAVSQQIRAIFAEYTRLIEPLSLDEAYLDVTENLKGMEIATEIASEIRERIKQITGLNASAGISYNKFLAKMASDLNKPNGQAVITPKNGPAFVEQLAVKKFHGVGPATAEKMHRFGIETGADLKSKSLQFLAEHFGKSGAYFYGIARGIDERQVRPDRIRKSVGAEDTFSVDINDLDLATAELRPLAEKVWHHCEAQRVSGKTVTVKVKYSDFTQATRSRTSALPVNGIQEILEAASALLATVYPFRRSVRLLGVTLSSLTNDQEAEDEEQPQLDLAL.

Residues 4–184 form the UmuC domain; that stretch reads IIHVDMDAFY…LAVKKFHGVG (181 aa). The Mg(2+) site is built by Asp8 and Asp102. Residue Glu103 is part of the active site.

This sequence belongs to the DNA polymerase type-Y family. As to quaternary structure, monomer. The cofactor is Mg(2+).

Its subcellular location is the cytoplasm. It carries out the reaction DNA(n) + a 2'-deoxyribonucleoside 5'-triphosphate = DNA(n+1) + diphosphate. In terms of biological role, poorly processive, error-prone DNA polymerase involved in untargeted mutagenesis. Copies undamaged DNA at stalled replication forks, which arise in vivo from mismatched or misaligned primer ends. These misaligned primers can be extended by PolIV. Exhibits no 3'-5' exonuclease (proofreading) activity. May be involved in translesional synthesis, in conjunction with the beta clamp from PolIII. The chain is DNA polymerase IV 2 (dinB2) from Agrobacterium fabrum (strain C58 / ATCC 33970) (Agrobacterium tumefaciens (strain C58)).